Reading from the N-terminus, the 868-residue chain is Dolichyl-phosphooligosaccharide-protein glycotransferase 3 (868 aa).

Topologically, residues 1-16 (MQNAESWFKKYWHLSV) are cytoplasmic. Residues 17–36 (LVIAALISVKLRILNPWNSV) form a helical membrane-spanning segment. At 37 to 101 (FTWTVRLGGN…IAGIIFSATS (65 aa)) the chain is on the extracellular side. A DXD motif 1 motif is present at residues 45–47 (GND). Residue Asp-47 participates in Mn(2+) binding. His-81 is an a glycophospholipid binding site. A helical transmembrane segment spans residues 102–131 (GESLRAVLAFIPAIGGVLAILPVYLLTREV). At 132–133 (FD) the chain is on the cytoplasmic side. Residues 134–153 (KRAAVIAAFLIAIVPGQFLQ) traverse the membrane as a helical segment. Residues 154 to 162 (RSILGFNDH) lie on the Extracellular side of the membrane. Asp-161 contacts Mn(2+). Positions 161 to 163 (DHH) match the DXD motif 2 motif. Residue His-162 participates in a glycophospholipid binding. His-163 contacts Mn(2+). Residues 163-184 (HIWEAFWQVSALGTFLLAYNRW) form a helical membrane-spanning segment. Topologically, residues 185–199 (KGHDLSHNLTARQMA) are cytoplasmic. A helical transmembrane segment spans residues 200 to 212 (YPVIAGITIGLYV). Residues 213-215 (LSW) are Extracellular-facing. The helical transmembrane segment at 216 to 238 (GAGFIIAPIILAFMFFAFVLAGF) threads the bilayer. At 239–241 (VNA) the chain is on the cytoplasmic side. Residues 242–262 (DRKNLSLVAVVTFAVSALIYL) traverse the membrane as a helical segment. At 263 to 279 (PFAFNYPGFSTIFYSPF) the chain is on the extracellular side. A helical membrane pass occupies residues 280 to 303 (QLLVLLGSAVIAAAFYQIEKWNDV). Topologically, residues 304 to 312 (GFFERVGLG) are cytoplasmic. The chain crosses the membrane as a helical span at residues 313–330 (RKGMPLAVIVLTALIMGL). At 331 to 373 (FFVISPDFARNLLSVVRVVQPKGGALTIAEVYPFFFTHNGEFT) the chain is on the extracellular side. The TIXE motif signature appears at 357–360 (TIAE). A helical transmembrane segment spans residues 374–396 (LTNAVLHFGALFFFGMAGILYSA). At 397-404 (YRFLKRRS) the chain is on the cytoplasmic side. Residues 405–423 (FPEMALLIWAIAMFIALWG) traverse the membrane as a helical segment. The Extracellular portion of the chain corresponds to 424–427 (QNRF). Position 426 (Arg-426) interacts with a glycophospholipid. A helical transmembrane segment spans residues 428–452 (AYYFAAVSAVYSALALSVVFDKLHL). Residues 453–468 (YRALENAIGARNKLSY) are Cytoplasmic-facing. Residues 469–494 (FRVAFALLIALAAIYPTYILADAQSS) traverse the membrane as a helical segment. Over 495–868 (YAGGPNKQWY…QNGEIIQLDL (374 aa)) the chain is Extracellular. Residues 550-552 (WWD) are interacts with target acceptor peptide in protein substrate. Residues 550 to 554 (WWDYG) carry the WWDYG motif motif. Positions 613-622 (EMETGKYYAM) match the DKi motif motif.

This sequence belongs to the STT3 family. The cofactor is Mg(2+). Mn(2+) is required as a cofactor. It depends on Zn(2+) as a cofactor.

Its subcellular location is the cell membrane. The catalysed reaction is an archaeal dolichyl phosphooligosaccharide + [protein]-L-asparagine = an archaeal dolichyl phosphate + a glycoprotein with the oligosaccharide chain attached by N-beta-D-glycosyl linkage to a protein L-asparagine.. It participates in protein modification; protein glycosylation. In terms of biological role, oligosaccharyl transferase (OST) that catalyzes the initial transfer of a defined glycan (a glucose-linked heptasaccharide composed of 3 Glc, 2 Man, 2 Gal and a sulfate for A.fulgidus AglB-L) from the lipid carrier dolichol-monophosphate to an asparagine residue within an Asn-X-Ser/Thr consensus motif in nascent polypeptide chains, the first step in protein N-glycosylation. This is Dolichyl-phosphooligosaccharide-protein glycotransferase 3 (aglB3) from Archaeoglobus fulgidus (strain ATCC 49558 / DSM 4304 / JCM 9628 / NBRC 100126 / VC-16).